A 106-amino-acid polypeptide reads, in one-letter code: Phosphoribosyl-ATP pyrophosphatase (106 aa).

Belongs to the PRA-PH family.

The protein localises to the cytoplasm. The catalysed reaction is 1-(5-phospho-beta-D-ribosyl)-ATP + H2O = 1-(5-phospho-beta-D-ribosyl)-5'-AMP + diphosphate + H(+). It functions in the pathway amino-acid biosynthesis; L-histidine biosynthesis; L-histidine from 5-phospho-alpha-D-ribose 1-diphosphate: step 2/9. The sequence is that of Phosphoribosyl-ATP pyrophosphatase from Rhizorhabdus wittichii (strain DSM 6014 / CCUG 31198 / JCM 15750 / NBRC 105917 / EY 4224 / RW1) (Sphingomonas wittichii).